We begin with the raw amino-acid sequence, 1112 residues long: Constitutive coactivator of PPAR-gamma-like protein 1 (1112 aa).

Positions 339-403 (PPHYLARPNP…YSLSEPALTL (65 aa)) are interaction with YES1, SRC and FYN. The interval 372–525 (QAKPAVPQVP…GKGSHMGTVQ (154 aa)) is disordered. 2 stretches are compositionally biased toward polar residues: residues 403–418 (LDTS…SYSN) and 433–445 (SPIN…SPNH). Residues 479–500 (GWEKTGSHAEPLARGDPGDQVK) are compositionally biased toward basic and acidic residues. Polar residues predominate over residues 503–512 (GSSTASSGSQ). Thr-653 bears the Phosphothreonine mark. The segment at 827–1112 (AEQAAKVEKM…LEAAVLNKEE (286 aa)) is RNA binding. 3 positions are modified to omega-N-methylarginine: Arg-871, Arg-882, and Arg-884. The segment at 919–943 (AFSGSDSSRTSKSQGGVQPIPSQGG) is disordered. The span at 922–934 (GSDSSRTSKSQGG) shows a compositional bias: polar residues. Lys-930 bears the N6-acetyllysine mark. A Phosphoserine modification is found at Ser-958. An omega-N-methylarginine mark is found at Arg-980 and Arg-984. Residues Ser-1021 and Ser-1042 each carry the phosphoserine modification. The segment at 1030-1090 (KSKSGESKSS…PCNTNPHLNA (61 aa)) is disordered. Polar residues predominate over residues 1070-1090 (HSESALNNDSKPCNTNPHLNA).

It belongs to the constitutive coactivator of PPAR-gamma family. As to quaternary structure, interacts with PURA. Interacts with SRC family protein kinases YES1, SRC and FYN. Upon tyrosine phosphorylation, interacts with PIK3R1. Interacts with IGF2BP1/IMP-1 in an RNA-dependent manner. Post-translationally, arg-980 is dimethylated, probably to asymmetric dimethylarginine. Phosphorylated on tyrosine by src family kinases upon ultraviolet exposure. As to expression, in the brain, predominantly expressed in the hippocampus, caudate putamen, cerebral cortex and cerebellum. Expression is restricted to neurons (at protein level).

It is found in the cytoplasm. The protein resides in the cell membrane. Functionally, component of the oxidative stress-induced survival signaling. May regulate the activation of SRC family protein kinases. May act as a scaffolding protein enabling SRC family protein kinases to phosphorylate and activate PI3-kinase. Binds IGF2 RNA and promotes the production of IGF2 protein. The protein is Constitutive coactivator of PPAR-gamma-like protein 1 (FAM120A) of Mus musculus (Mouse).